The chain runs to 211 residues: Thiamine-phosphate synthase (211 aa).

4-amino-2-methyl-5-(diphosphooxymethyl)pyrimidine-binding positions include 37–41 and N69; that span reads QLRIK. The Mg(2+) site is built by D70 and D89. S108 contributes to the 4-amino-2-methyl-5-(diphosphooxymethyl)pyrimidine binding site. 134–136 lines the 2-[(2R,5Z)-2-carboxy-4-methylthiazol-5(2H)-ylidene]ethyl phosphate pocket; the sequence is TQT. K137 is a 4-amino-2-methyl-5-(diphosphooxymethyl)pyrimidine binding site. 2-[(2R,5Z)-2-carboxy-4-methylthiazol-5(2H)-ylidene]ethyl phosphate-binding positions include G166 and 186-187; that span reads VS.

This sequence belongs to the thiamine-phosphate synthase family. Mg(2+) serves as cofactor.

The catalysed reaction is 2-[(2R,5Z)-2-carboxy-4-methylthiazol-5(2H)-ylidene]ethyl phosphate + 4-amino-2-methyl-5-(diphosphooxymethyl)pyrimidine + 2 H(+) = thiamine phosphate + CO2 + diphosphate. The enzyme catalyses 2-(2-carboxy-4-methylthiazol-5-yl)ethyl phosphate + 4-amino-2-methyl-5-(diphosphooxymethyl)pyrimidine + 2 H(+) = thiamine phosphate + CO2 + diphosphate. It catalyses the reaction 4-methyl-5-(2-phosphooxyethyl)-thiazole + 4-amino-2-methyl-5-(diphosphooxymethyl)pyrimidine + H(+) = thiamine phosphate + diphosphate. It participates in cofactor biosynthesis; thiamine diphosphate biosynthesis; thiamine phosphate from 4-amino-2-methyl-5-diphosphomethylpyrimidine and 4-methyl-5-(2-phosphoethyl)-thiazole: step 1/1. Its function is as follows. Condenses 4-methyl-5-(beta-hydroxyethyl)thiazole monophosphate (THZ-P) and 2-methyl-4-amino-5-hydroxymethyl pyrimidine pyrophosphate (HMP-PP) to form thiamine monophosphate (TMP). The chain is Thiamine-phosphate synthase from Escherichia coli O139:H28 (strain E24377A / ETEC).